We begin with the raw amino-acid sequence, 322 residues long: Mas-related G-protein coupled receptor member X4 (322 aa).

Over Met1 to Thr31 the chain is Extracellular. N-linked (GlcNAc...) asparagine glycosylation occurs at Asn25. The helical transmembrane segment at Val32–Leu52 threads the bilayer. The Cytoplasmic portion of the chain corresponds to Gly53–Ala60. Residues Val61–Ile81 traverse the membrane as a helical segment. Residues Arg82–Lys96 lie on the Extracellular side of the membrane. Asn89 is a glycosylation site (N-linked (GlcNAc...) asparagine). The helical transmembrane segment at Ile97–Ser117 threads the bilayer. Residues Thr118 to His137 lie on the Cytoplasmic side of the membrane. The helical transmembrane segment at Leu138–Trp158 threads the bilayer. The Extracellular segment spans residues Arg159–Asp177. A helical membrane pass occupies residues Phe178–Leu198. The Cytoplasmic segment spans residues Leu199 to Ile218. A helical membrane pass occupies residues Leu219–Ile239. The Extracellular portion of the chain corresponds to Tyr240–Tyr254. Residues Leu255 to Val275 form a helical membrane-spanning segment. Over Gly276–Pro322 the chain is Cytoplasmic. Residues Pro299–Pro322 are disordered.

It belongs to the G-protein coupled receptor 1 family. Mas subfamily. Uniquely localized in a subset of small dorsal root and trigeminal sensory neurons.

The protein localises to the cell membrane. Orphan receptor. Probably involved in the function of nociceptive neurons. May regulate nociceptor function and/or development, including the sensation or modulation of pain. Potently activated by enkephalins. The chain is Mas-related G-protein coupled receptor member X4 (MRGPRX4) from Homo sapiens (Human).